The following is a 133-amino-acid chain: p53 and DNA damage-regulated protein 1 (133 aa).

This sequence belongs to the prefoldin subunit beta family. As to quaternary structure, component of the PAQosome complex which is responsible for the biogenesis of several protein complexes and which consists of R2TP complex members RUVBL1, RUVBL2, RPAP3 and PIH1D1, URI complex members PFDN2, PFDN6, PDRG1, UXT and URI1 as well as ASDURF, POLR2E and DNAAF10/WDR92. As to expression, predominantly expressed in normal testis and exhibits reduced but detectable expression in other organs.

The protein localises to the cytoplasm. May play a role in chaperone-mediated protein folding. The polypeptide is p53 and DNA damage-regulated protein 1 (PDRG1) (Homo sapiens (Human)).